The primary structure comprises 483 residues: M protein, serotype 6 (483 aa).

The first 42 residues, 1 to 42 (MAKNNTNRHYSLRKLKKGTASVAVALSVIGAGLVVNTNEVSA), serve as a signal peptide directing secretion. A coiled-coil region spans residues 54–171 (DKARELLNKY…IGTLKKTLDE (118 aa)). 8 tandem repeats follow at residues 69–75 (MLQANND), 76–82 (KLTTENN), 83–89 (NLTDQNK), 90–96 (NLTTENK), 97–103 (NLTDQNK), 104–110 (NLTTENK), 111–117 (NLTDQNK), and 118–124 (NLTTENK). Positions 69 to 138 (MLQANNDKLT…EENRLTTENK (70 aa)) are 10 X 7 AA approximate tandem repeats of [KMNR]-L-[TQ]-[TDA]-[ENQ]-N-[NDK]. Over residues 74 to 87 (NDKLTTENNNLTDQ) the composition is skewed to polar residues. Residues 74 to 157 (NDKLTTENNN…EEEAANKERE (84 aa)) are disordered. Over residues 88–113 (NKNLTTENKNLTDQNKNLTTENKNLT) the composition is skewed to low complexity. 2 stretches are compositionally biased toward basic and acidic residues: residues 122-135 (ENKE…RLTT) and 143-157 (KLSE…KERE). Residues 125–131 (ELKAEEN) form a 9-1; approximate repeat. Tandem repeats lie at residues 132–138 (RLTTENK), 157–181 (ENKE…AKEQ), 182–206 (ESKE…AKEQ), 207–231 (ESKE…AKEQ), and 232–256 (ESKE…AREQ). The tract at residues 157-269 (ENKEAIGTLK…QDIGALKQEL (113 aa)) is 4.5 X 25 AA tandem repeats of E-[NS]-K-E-[TA]-I-G-T-L-K-K-[TI]-L-D-E-T-V-K-D-K-I-A-[KR]-E-Q. Disordered stretches follow at residues 255 to 298 (EQKS…EAKK) and 314 to 345 (VKEE…VEKA). Residues 257-269 (KSKQDIGALKQEL) form a 5-2; truncated repeat. 2 stretches are compositionally biased toward basic and acidic residues: residues 268–298 (ELAK…EAKK) and 328–345 (LRRD…VEKA). 2 C repeats span residues 270-304 (AKKD…EKDL) and 312-346 (DKVK…EKAL). The tract at residues 279-347 (SEASRKGLRR…AKKQVEKALE (69 aa)) is binding to CD46. The interval 279–347 (SEASRKGLRR…AKKQVEKALE (69 aa)) is two directly repeated 27 amino acid blocks separated by 15 amino acids. The stretch at 280–408 (EASRKGLRRD…LAKLRAGKAS (129 aa)) forms a coiled coil. The segment at 348–411 (EANSKLAALE…LRAGKASDSQ (64 aa)) is hydrophilic. 4 D repeats span residues 379–384 (AKLEAE), 385–390 (AKALKE), 393–398 (AKQAEE), and 400–405 (AKLRAG). Residues 400–455 (AKLRAGKASDSQTPDAKPGNKVVPGKGQAPQAGTKPNQNKAPMKETKRQLPSTGET) form a disordered region. The LPXTG sorting signal signature appears at 449-453 (LPSTG). T452 is modified (pentaglycyl murein peptidoglycan amidated threonine). Positions 453-483 (GETANPFFTAAALTVMATAGVAAVVKRKEEN) are cleaved as a propeptide — removed by sortase.

This sequence belongs to the M protein family.

It localises to the secreted. The protein localises to the cell wall. Functionally, mediates the attachment of S.pyogenes to skin epithelial cells through the binding of the human membrane cofactor protein CD46. Also binds to the factor H and factor H-like protein 1. These interactions could contribute to the fact that the M6 protein protects the bacterium from the phagocytosis by regulating the complement activation on the bacterial surface. The protein is M protein, serotype 6 (emm6) of Streptococcus pyogenes.